A 663-amino-acid chain; its full sequence is MGPLRESKKEHRVQHHDKEISRSRIPRLILRPHMPQQQHKVSPASESPFSEEESREFNPSSSGRSARTVSSNSFCSDDTGCPSSQSVSPVKTPSDAGNSPIGFCPGSDEGFTRKKCTIGMVGEGSIQSSRYKKESKSGLVKPGSEADFSSSSSTGSISAPEVHMSTAGSKRSSSSRNRGPHGRSNGASSHKPGSSPSSPREKDLLSMLCRNQLSPVNIHPSYAPSSPSSSNSGSYKGSDCSPIMRRSGRYMSCGENHGVRPPNPEQYLTPLQQKEVTVRHLKTKLKESERRLHERESEIVELKSQLARMREDWIEEECHRVEAQLALKEARKEIKQLKQVIETMRSSLADKDKGIQKYFVDINIQNKKLESLLQSMEMAHSGSLRDELCLDFPCDSPEKSLTLNPPLDTMADGLSLEEQVTGEGADRELLVGDSIANSTDLFDEIVTATTTESGDLELVHSTPGANVLELLPIVMGQEEGSVVVERAVQTDVVPYSPAISELIQSVLQKLQDPCPSSLASPDESEPDSMESFPESLSALVVDLTPRNPNSAILLSPVETPYANVDAEVHANRLMRELDFAACVEERLDGVIPLARGGVVRQYWSSSFLVDLLAVAAPVVPTVLWAFSTQRGGTDPVYNIGALLRGCCVVALHSLRRTAFRIKT.

2 disordered regions span residues 1-202 (MGPL…PREK) and 216-267 (VNIH…PEQY). The tract at residues 2-417 (GPLRESKKEH…DTMADGLSLE (416 aa)) is sufficient for interaction with KIF5B. Serine 50 is modified (phosphoserine). The segment covering 57 to 73 (FNPSSSGRSARTVSSNS) has biased composition (low complexity). Residues 81-97 (CPSSQSVSPVKTPSDAG) are compositionally biased toward polar residues. Serine 107 is modified (phosphoserine). Composition is skewed to low complexity over residues 145 to 158 (EADF…GSIS), 188 to 198 (SSHKPGSSPSS), and 221 to 241 (SYAP…SDCS). Residues 271 to 353 (LQQKEVTVRH…MRSSLADKDK (83 aa)) adopt a coiled-coil conformation. A sufficient for interaction with STX1A region spans residues 310 to 417 (REDWIEEECH…DTMADGLSLE (108 aa)). Phosphoserine occurs at positions 396 and 555. The chain crosses the membrane as a helical span at residues 606–626 (SFLVDLLAVAAPVVPTVLWAF).

In terms of assembly, interacts with STX1A and KIF5B. Isoform 3, isoform 4 and isoform 5 are expressed in HeLa cell line (at protein level). Isoform 3 is expressed in fetal and adult brain. Isoform 4 is expressed in numerous fetal tissues (brain, kidney, liver, lung, and thymus) and in adult brain, kidney, liver, lung, pancreas, colon, prostate, small intestine, testis and thymus. Isoform 5 is expressed in fetal brain, brain and small intestine.

It is found in the cytoplasm. The protein localises to the cytoskeleton. Its subcellular location is the cytoplasmic vesicle. It localises to the golgi apparatus membrane. Its function is as follows. Part of a kinesin motor-adapter complex that is critical for the anterograde axonal transport of active zone components and contributes to activity-dependent presynaptic assembly during neuronal development. The sequence is that of Syntabulin (SYBU) from Homo sapiens (Human).